Here is a 63-residue protein sequence, read N- to C-terminus: MPTGFHRESATIYQFPVKAIRNANRFERARLMEREAAEVCDAALDSCWYHDEAVRESDRPTKS.

Inhibits the synthesis of glutamine synthetase II. The sequence is that of Glutamine synthetase translation inhibitor (gstI) from Rhizobium leguminosarum.